Consider the following 331-residue polypeptide: Homoarginine-6-hydroxylase 2-ODD-C23 (331 aa).

The Fe2OG dioxygenase domain maps to 182 to 289 (PFWVMRLIGY…RVSVVYFYET (108 aa)). His212, Asp214, and His270 together coordinate Fe cation. Residue Arg280 coordinates 2-oxoglutarate.

The protein belongs to the iron/ascorbate-dependent oxidoreductase family. Fe(2+) is required as a cofactor.

It localises to the cytoplasm. The protein localises to the cytosol. It catalyses the reaction L-homoarginine + 2-oxoglutarate + O2 = 6-hydroxy-L-homoarginine + succinate + CO2. 2-oxoglutarate-dependent dioxygenase catalyzing homoarginine 6-hydroxylation thus producing 6-hydroxy-L-homoarginine. Guanidine (Gd) is in turn synthesized by the spontaneous conversion of 6-hydroxy-L-homoarginine to (S)-2-amino-6-oxohexanoate (RHEA:79843); guanidine is a nitrogen-rich compound that can serve as a defense or signaling substance. The chain is Homoarginine-6-hydroxylase 2-ODD-C23 from Glycine max (Soybean).